Consider the following 417-residue polypeptide: Caveolae-associated protein 2 (417 aa).

The interval 1 to 42 (MGEDAAQAEKFQHPNTDMLQEKPSNPSPMPSSTPSPSLNLGS) is disordered. G2 carries the post-translational modification N-acetylglycine. Residues 2–168 (GEDAAQAEKF…IFQEESEIPA (167 aa)) form an interaction with CAVIN1 region. A phosphoserine mark is found at S27, S35, S37, and S51. 2 coiled-coil regions span residues 61 to 87 (LLDK…INLE) and 126 to 267 (RAVR…VERR). A leucine-zipper region spans residues 62 to 100 (LDKLVNMLDAVRENQHNMEQRQINLEGSVKGIQNDLTKL). Position 195 is a phosphothreonine (T195). Disordered stretches follow at residues 198–242 (NVDL…DSLK) and 256–381 (KLGT…ALQQ). A phosphoserine mark is found at S202, S203, and S217. Residues 202–218 (SSDDELPGDEEALEDSA) are compositionally biased toward acidic residues. The segment covering 219 to 242 (EEKMEESRAEKIKRSSLKKVDSLK) has biased composition (basic and acidic residues). Over residues 274 to 286 (LTPNHQKASSGKS) the composition is skewed to polar residues. 6 positions are modified to phosphoserine: S282, S283, S286, S287, S292, and S295. Basic and acidic residues predominate over residues 302 to 320 (REGESSAENETKLEEQVQD). S326, S335, S358, and S362 each carry phosphoserine. Polar residues predominate over residues 354–365 (RGNNSGVGSNAD). T367 is modified (phosphothreonine). The segment covering 367 to 376 (TIEEDEEEES) has biased composition (acidic residues). Y387 carries the post-translational modification Phosphotyrosine. Phosphoserine occurs at positions 389 and 395.

Belongs to the CAVIN family. In terms of assembly, component of the CAVIN complex composed of CAVIN1, CAVIN2, CAVIN3 and CAVIN. Interacts with CAVIN4; this augments the transactivation of NPPA by CAVIN4. Binds to PRKCA in the presence of phosphatidylserine. Interacts with CAVIN1 and CAV3. Post-translationally, the N-terminus is blocked. In terms of processing, phosphorylated on Ser residues.

The protein resides in the cytoplasm. It localises to the cytosol. The protein localises to the membrane. It is found in the caveola. Its function is as follows. Plays an important role in caveolar biogenesis and morphology. Regulates caveolae morphology by inducing membrane curvature within caveolae. Plays a role in caveola formation in a tissue-specific manner. Required for the formation of caveolae in the lung and fat endothelia but not in the heart endothelia. Negatively regulates the size or stability of CAVIN complexes in the lung endothelial cells. May play a role in targeting PRKCA to caveolae. This is Caveolae-associated protein 2 from Rattus norvegicus (Rat).